The chain runs to 144 residues: NADH-ubiquinone oxidoreductase chain 6 (144 aa).

The next 5 membrane-spanning stretches (helical) occupy residues 1–21 (MVKV…INID), 25–45 (SSFF…MSMH), 46–66 (IWFS…ILVY), 79–99 (YMAV…VLTY), and 108–128 (FYYS…LFFM).

The protein belongs to the complex I subunit 6 family.

It localises to the mitochondrion membrane. It carries out the reaction a ubiquinone + NADH + 5 H(+)(in) = a ubiquinol + NAD(+) + 4 H(+)(out). In terms of biological role, core subunit of the mitochondrial membrane respiratory chain NADH dehydrogenase (Complex I) that is believed to belong to the minimal assembly required for catalysis. Complex I functions in the transfer of electrons from NADH to the respiratory chain. The immediate electron acceptor for the enzyme is believed to be ubiquinone. This chain is NADH-ubiquinone oxidoreductase chain 6, found in Caenorhabditis elegans.